The following is a 928-amino-acid chain: RhoGEF domain-containing protein gxcH (928 aa).

Over residues 30–48 (SKSFDNNNNNNSNTNNIKN) the composition is skewed to low complexity. 3 disordered regions span residues 30–76 (SKSF…PPVP), 90–201 (ITNY…PPLG), and 318–410 (DNGV…NKDT). Positions 93–103 (YIPTTPPSINI) are enriched in polar residues. Acidic residues predominate over residues 112–123 (DNYDDNYDDNYS). Polar residues-rich tracts occupy residues 129–141 (TSTTPPQFNSPEF), 175–187 (ETFNDQNNNEGLQ), and 334–367 (KSGTTLDSEPNLKSVSSSNRGSFVISKSSYNLRG). Positions 377-407 (NQTTNKNNSNNNNNNTTTNNNNNNNNNNNNN) are enriched in low complexity. In terms of domain architecture, DH spans 484–671 (IFNKVVKEII…GKIVSDINGK (188 aa)). The PH-like stretch occupies residues 699–807 (FIGEGKVKKV…NKIEDQIVSE (109 aa)). The tract at residues 835–928 (SDSQSDFVDH…NTEPENFSFY (94 aa)) is disordered. A compositionally biased stretch (low complexity) spans 848–857 (QEQQEQQQQQ).

Functionally, GTPase-activating protein. This chain is RhoGEF domain-containing protein gxcH (gxcH), found in Dictyostelium discoideum (Social amoeba).